Reading from the N-terminus, the 471-residue chain is Tetratricopeptide repeat protein 29 (471 aa).

TPR repeat units follow at residues 92–131 (DKLP…EAAE), 136–173 (YEEV…AQLI), 182–215 (AEAE…THGR), 234–267 (VRTY…AREG), 274–307 (GEAS…STSL), 314–347 (GRAY…ARNN), and 354–387 (IRAC…AMEL). Residues 449 to 471 (ATEDNIYQLPDAEEETRRSPENQ) are disordered.

As to expression, expressed in spermatozoa (at protein level).

The protein localises to the cytoplasm. The protein resides in the cytoskeleton. Its subcellular location is the flagellum axoneme. Axonemal protein which is implicated in axonemal and/or peri-axonemal structure assembly and regulates flagellum assembly and beating and therefore sperm motility. The protein is Tetratricopeptide repeat protein 29 (Ttc29) of Mus musculus (Mouse).